Consider the following 362-residue polypeptide: Red-sensitive opsin (362 aa).

The Extracellular segment spans residues 1–49 (MAAWEAAFAARRRHEEEDTTRDSVFTYTNSNNTRGPFEGPNYHIAPRWV). Residue Asn31 is glycosylated (N-linked (GlcNAc...) asparagine). A helical transmembrane segment spans residues 50–74 (YNLTSVWMIFVVAASVFTNGLVLVA). Residues 75-86 (TWKFKKLRHPLN) lie on the Cytoplasmic side of the membrane. The helical transmembrane segment at 87–112 (WILVNLAVADLGETVIASTISVINQI) threads the bilayer. The Extracellular portion of the chain corresponds to 113-126 (SGYFILGHPMCVVE). An intrachain disulfide couples Cys123 to Cys200. The helical transmembrane segment at 127-146 (GYTVSACGITALWSLAIISW) threads the bilayer. At 147-165 (ERWFVVCKPFGNIKFDGKL) the chain is on the cytoplasmic side. A helical transmembrane segment spans residues 166–189 (AVAGILFSWLWSCAWTAPPIFGWS). Residues 190–215 (RYWPHGLKTSCGPDVFSGSSDPGVQS) lie on the Extracellular side of the membrane. A helical membrane pass occupies residues 216–243 (YMVVLMVTCCFFPLAIIILCYLQVWLAI). Residues 244–265 (RAVAAQQKESESTQKAEKEVSR) lie on the Cytoplasmic side of the membrane. The chain crosses the membrane as a helical span at residues 266 to 289 (MVVVMIVAYCFCWGPYTFFACFAA). Residues 290 to 297 (ANPGYAFH) are Extracellular-facing. The chain crosses the membrane as a helical span at residues 298–322 (PLAAALPAYFAKSATIYNPIIYVFM). Lys309 is subject to N6-(retinylidene)lysine. The Cytoplasmic segment spans residues 323–362 (NRQFRNCILQLFGKKVDDGSEVSTSRTEVSSVSNSSVSPA).

Belongs to the G-protein coupled receptor 1 family. Opsin subfamily. In terms of processing, phosphorylated on some or all of the serine and threonine residues present in the C-terminal region. The color pigments are found in the cone photoreceptor cells.

Its subcellular location is the membrane. Its function is as follows. Visual pigments are the light-absorbing molecules that mediate vision. They consist of an apoprotein, opsin, covalently linked to cis-retinal. The chain is Red-sensitive opsin from Gallus gallus (Chicken).